A 206-amino-acid polypeptide reads, in one-letter code: Putative amino-acid transporter YggA (206 aa).

The next 6 membrane-spanning stretches (helical) occupy residues 1–21 (MFAT…PIGA), 37–57 (LLAA…GVFG), 65–85 (SPIG…WFGI), 116–136 (LGVT…LGSF), 148–168 (FAAG…FGAA), and 185–205 (TIVG…ALLA).

It belongs to the LysE/ArgO transporter (TC 2.A.75) family.

It is found in the cell membrane. The protein is Putative amino-acid transporter YggA (yggA) of Aeromonas salmonicida.